The following is a 141-amino-acid chain: Large ribosomal subunit protein uL11 (141 aa).

The protein belongs to the universal ribosomal protein uL11 family. In terms of assembly, part of the ribosomal stalk of the 50S ribosomal subunit. Interacts with L10 and the large rRNA to form the base of the stalk. L10 forms an elongated spine to which L12 dimers bind in a sequential fashion forming a multimeric L10(L12)X complex. One or more lysine residues are methylated.

Its function is as follows. Forms part of the ribosomal stalk which helps the ribosome interact with GTP-bound translation factors. The polypeptide is Large ribosomal subunit protein uL11 (Roseiflexus castenholzii (strain DSM 13941 / HLO8)).